Consider the following 70-residue polypeptide: Small ribosomal subunit protein bS21 (70 aa).

It belongs to the bacterial ribosomal protein bS21 family.

The protein is Small ribosomal subunit protein bS21 of Wolinella succinogenes (strain ATCC 29543 / DSM 1740 / CCUG 13145 / JCM 31913 / LMG 7466 / NCTC 11488 / FDC 602W) (Vibrio succinogenes).